The following is a 138-amino-acid chain: Hexon-interlacing protein (138 aa).

Residues 100–127 adopt a coiled-coil conformation; sequence LLVLLAQLEALTQRLGELSKQVAQLREQ.

The protein belongs to the adenoviridae hexon-interlacing protein family. As to quaternary structure, homotrimer. Interacts with hexon protein; this interaction tethers the hexons together. Self-interacts with adjacent proteins. Interacts with kinesin light chain KLC1; this interaction leads to capsid disruption at the nuclear pore complex during virus entry into host cell.

The protein localises to the virion. The protein resides in the host nucleus. In terms of biological role, structural component of the virion that acts as a cement protein on the capsid exterior and forms triskelion structures consisting of three molecules that stabilize three hexon trimers at the center of each icosahedral facet and fixes the peripentonal hexons. Dispensable for assembly. During virus entry, recruits the anterograde motor kinesin-1 to the capsid docked at the nuclear pore complex thereby subjecting the docked capsid to a pulling force. The resulting tension leads to capsid disruption, dispersion of capsid fragments toward cell periphery and eventually viral DNA entry into the host nucleus. The sequence is that of Hexon-interlacing protein from Human adenovirus B serotype 7 (HAdV-7).